The following is a 151-amino-acid chain: Myosin catalytic light chain, smooth muscle (151 aa).

Ala1 carries the N-acetylalanine modification. EF-hand domains lie at 6–41 (DRITECQEAFELFDRSAEGKVFLGQVGDILRALGQN), 83–118 (GSYEDFVEGLRVFDKENNGKIMGAELRHVLSTLGEK), and 119–151 (MSEEEVEESLLQGQQDPNGCIHYEEFSKYLLEG).

In terms of biological role, in molluscan muscle, calcium regulation is associated with myosin rather than with actin. Muscle myosin contains two types of light chains: the catalytic light chain, essential for ATPase activity, and the regulatory light chain, a calcium-binding protein responsible for Ca(2+) dependent binding and Ca(2+) dependent Mg-ATPase activity. In Halocynthia roretzi (Sea squirt), this protein is Myosin catalytic light chain, smooth muscle.